The following is a 536-amino-acid chain: Phosphoenolpyruvate carboxykinase (ATP) (536 aa).

3 residues coordinate substrate: Arg-61, Tyr-195, and Lys-201. ATP contacts are provided by residues Lys-201, His-220, and 236–244 (GLSGTGKTT). Residues Lys-201 and His-220 each coordinate Mn(2+). Asp-257 lines the Mn(2+) pocket. 3 residues coordinate ATP: Glu-285, Arg-322, and Thr-447. Arg-322 contacts substrate.

It belongs to the phosphoenolpyruvate carboxykinase (ATP) family. Mn(2+) serves as cofactor.

It is found in the cytoplasm. The catalysed reaction is oxaloacetate + ATP = phosphoenolpyruvate + ADP + CO2. The protein operates within carbohydrate biosynthesis; gluconeogenesis. Involved in the gluconeogenesis. Catalyzes the conversion of oxaloacetate (OAA) to phosphoenolpyruvate (PEP) through direct phosphoryl transfer between the nucleoside triphosphate and OAA. In Chelativorans sp. (strain BNC1), this protein is Phosphoenolpyruvate carboxykinase (ATP).